Consider the following 256-residue polypeptide: Chlorophyll a-b binding protein CP24 10B, chloroplastic (256 aa).

The N-terminal 45 residues, 1 to 45, are a transit peptide targeting the chloroplast; sequence MTTTSATAVLNGLSSSFLTGGKKTQALLGAHVTARVTTPKRFVVA. Transmembrane regions (helical) follow at residues 106–126 and 134–154; these read WAMAAVLGIFVGQAWSGIPWF and AIAPFSFGSLLGTQLLLMGWV.

The protein belongs to the ELIP/psbS family.

The protein resides in the plastid. It localises to the chloroplast thylakoid membrane. The polypeptide is Chlorophyll a-b binding protein CP24 10B, chloroplastic (CAP10B) (Solanum lycopersicum (Tomato)).